Consider the following 335-residue polypeptide: Leukocyte cell-derived chemotaxin 1 (335 aa).

Residues 45–65 form a helical membrane-spanning segment; the sequence is VVLISGAVLLLLGAIGAFYFW. One can recognise a BRICHOS domain in the interval 104 to 201; that stretch reads GSGAEEAVEV…LCGDLPIFWL (98 aa). The cysteines at positions 131 and 193 are disulfide-linked. Residues 211–214 constitute a propeptide that is removed on maturation; it reads RERR. The segment at 221–269 is disordered; that stretch reads VTTTTTRRLRSGPQGTPAPGRPNNGTRPSVQEDAEPFNPDNPYHQQEGE. Thr-223 carries an N-linked (GlcNAc...) asparagine; in variant 223-N-E-224 glycan. O-linked (GalNAc...) threonine; partial glycosylation is present at Thr-236. N-linked (GlcNAc...) asparagine glycosylation occurs at Asn-244. 4 cysteine pairs are disulfide-bonded: Cys-283-Cys-287, Cys-284-Cys-324, Cys-294-Cys-318, and Cys-298-Cys-314.

It belongs to the chondromodulin-1 family. In terms of processing, after cleavage, the post-translationally modified ChM-I is secreted as a glycoprotein. Two other smaller nonglycosylated chondromodulin forms (9 kDa and 7 kDa) are found either in developing articular cartilage or in chondrocytes. The 9 kDa form could be processed by an extracellular matrix-associated protease as a metalloproteinase and the 7 kDa form could be processed intracellularly. Nasal and articular cartilage, and fetal epiphysis.

The protein localises to the secreted. Its subcellular location is the extracellular space. It is found in the extracellular matrix. The protein resides in the endomembrane system. Bifunctional growth regulator that stimulates the growth of cultured chondrocytes in the presence of basic fibroblast growth factor (FGF) but inhibits the growth of cultured vascular endothelial cells. May contribute to the rapid growth of cartilage and vascular invasion prior to the replacement of cartilage by bone during endochondral bone development. Inhibits in vitro tube formation and mobilization of endothelial cells. Plays a role as antiangiogenic factor in cardiac valves to suppress neovascularization. This Bos taurus (Bovine) protein is Leukocyte cell-derived chemotaxin 1.